Consider the following 82-residue polypeptide: Cytochrome b559 subunit alpha (82 aa).

The chain crosses the membrane as a helical span at residues 21-35; sequence VIHSITIPALFIAGW. Residue His-23 participates in heme binding.

Belongs to the PsbE/PsbF family. Heterodimer of an alpha subunit and a beta subunit. PSII is composed of 1 copy each of membrane proteins PsbA, PsbB, PsbC, PsbD, PsbE, PsbF, PsbH, PsbI, PsbJ, PsbK, PsbL, PsbM, PsbT, PsbX, PsbY, PsbZ, Psb30/Ycf12, peripheral proteins PsbO, CyanoQ (PsbQ), PsbU, PsbV and a large number of cofactors. It forms dimeric complexes. Requires heme b as cofactor.

The protein resides in the cellular thylakoid membrane. Functionally, this b-type cytochrome is tightly associated with the reaction center of photosystem II (PSII). PSII is a light-driven water:plastoquinone oxidoreductase that uses light energy to abstract electrons from H(2)O, generating O(2) and a proton gradient subsequently used for ATP formation. It consists of a core antenna complex that captures photons, and an electron transfer chain that converts photonic excitation into a charge separation. In Nostoc sp. (strain PCC 7120 / SAG 25.82 / UTEX 2576), this protein is Cytochrome b559 subunit alpha.